The primary structure comprises 341 residues: Eukaryotic translation initiation factor 3 subunit I (341 aa).

WD repeat units follow at residues 8 to 47, 56 to 95, 151 to 190, 194 to 233, 235 to 274, and 291 to 331; these read GHERSLNQIVFNSEGDLLFSASKDSVVNAWYTSNGERLGT, GHNGSVWTVAVDSQTRFLLTGGADNAMKLWEVKTGECLYT, LSGSRATVAIWAPLSDYIITGHESGKIAKYDVKTGEEVQA, EHSALISDIQLSPDGTYFITASKDKTARLWDIETLEVMKV, TTETPVNSAVITPDRPYIILGGGQDAMNVTTTSQRAGKFE, and GHFG…RSRP.

Belongs to the eIF-3 subunit I family. In terms of assembly, component of the eukaryotic translation initiation factor 3 (eIF-3) complex.

The protein localises to the cytoplasm. Functionally, component of the eukaryotic translation initiation factor 3 (eIF-3) complex, which is involved in protein synthesis of a specialized repertoire of mRNAs and, together with other initiation factors, stimulates binding of mRNA and methionyl-tRNAi to the 40S ribosome. The eIF-3 complex specifically targets and initiates translation of a subset of mRNAs involved in cell proliferation. This is Eukaryotic translation initiation factor 3 subunit I from Cryptococcus neoformans var. neoformans serotype D (strain B-3501A) (Filobasidiella neoformans).